The following is a 245-amino-acid chain: Probable transcriptional regulatory protein BF2589 (245 aa).

The tract at residues 225-245 (EDEDVQNVYTNMKPADNEGEE) is disordered.

This sequence belongs to the TACO1 family.

The protein resides in the cytoplasm. The chain is Probable transcriptional regulatory protein BF2589 from Bacteroides fragilis (strain ATCC 25285 / DSM 2151 / CCUG 4856 / JCM 11019 / LMG 10263 / NCTC 9343 / Onslow / VPI 2553 / EN-2).